The following is a 1498-amino-acid chain: Mitogen-activated protein kinase kinase kinase nsy-1 (1498 aa).

2 disordered regions span residues 1–35 (MSQNNKRQVQHNHEMSNDVCPLPLPPRGAPPPTAY) and 190–209 (LQSYDKNNNDDDSKPPFART). Over residues 22 to 33 (LPLPPRGAPPPT) the composition is skewed to pro residues. The 262-residue stretch at 664-925 (SNERVVLGKG…AKDLLQDPFI (262 aa)) folds into the Protein kinase domain. ATP-binding positions include 670–678 (LGKGTYGTV) and K693. D790 serves as the catalytic Proton acceptor. The interval 1022–1050 (IDHARNRTFSSSSPVPDGQSSAGTNMSHP) is disordered. Residues 1031-1042 (SSSSPVPDGQSS) show a composition bias toward low complexity. A coiled-coil region spans residues 1276–1314 (SREERVREDRKELRTLQEENEILIERLLQVERELNAQLK). Residues 1461–1498 (QPVFLSPMRSRDDSLDDYHSSSADDMYTGAAAETSSGN) are disordered. Positions 1469 to 1479 (RSRDDSLDDYH) are enriched in basic and acidic residues.

The protein belongs to the protein kinase superfamily. STE Ser/Thr protein kinase family. MAP kinase kinase kinase subfamily. Interacts with unc-43. Interacts with sek-1. Mg(2+) is required as a cofactor. May be phosphorylated upon pathogenic bacterial infection. May be regulated by proteasomal degradation mediated by the E3-ubiquitin ligase rle-1. Expressed in intestine, hypodermis, rectal gland cell and neurons including sensory AWC neurons.

The protein localises to the cell projection. Its subcellular location is the axon. It localises to the perikaryon. The enzyme catalyses L-seryl-[protein] + ATP = O-phospho-L-seryl-[protein] + ADP + H(+). The catalysed reaction is L-threonyl-[protein] + ATP = O-phospho-L-threonyl-[protein] + ADP + H(+). In terms of biological role, serine/threonine-protein kinase which, by phosphorylating and activating sek-1, plays an important role in the activation of the p38 pathway also composed of the downstream effectors sek-1 and pmk-1. Downstream of CaMKII unc-43 and adapter protein tir-1, plays a role in determining asymmetric cell fates in olfactory AWC neurons during neuronal development. Activation results in the repression of odorant receptor str-2 expression in one of the 2 AWC neurons. Involved in resistance to pathogenic Gram-positive and Gram-negative bacterial and fungal infection. Involved in resistance to the nematotoxic C.cinerea galectin Cgl2. Probably by activating the sek1/pmk-1/skn-1 pathway, involved in the up-regulation of gcs-1 and glutathione-S-transferase gst-4 expression upon bacterial infection. Probably downstream of tir-1 and nipi-3, required for the expression of antimicrobial peptide nlp-29 in the epidermis in response to fungal infection or physical injury. Plays a role in resistance to several environmental stresses including oxidative, protein misfolding (ER) and osmotic stresses, and DNA-damaging reagents. Plays a role in the stabilization of transcription factor rnt-1 in the intestine during oxidative stress. Involved in germline apoptosis induced by heavy metals, such as Cu(2+). In addition, plays a role in the up-regulation of gcs-1 upon arsenite treatment, most likely through activation of pmk-1, to confer protection against toxicity induced by heavy metals. Plays a role downstream of tir-1 in regulating susceptibility to anoxia. Involved in egg laying. The protein is Mitogen-activated protein kinase kinase kinase nsy-1 of Caenorhabditis elegans.